Consider the following 384-residue polypeptide: GTPase Obg (384 aa).

The Obg domain maps to 1 to 159 (MKFIDEAKIE…RSLQLELKVL (159 aa)). The segment at 20 to 46 (ATSFRREKFVPRGGPDGGDGGKGGSVW) is disordered. The segment covering 33-43 (GPDGGDGGKGG) has biased composition (gly residues). One can recognise an OBG-type G domain in the interval 160–348 (ADVGLLGMPN…LVHQINQYLI (189 aa)). Residues 166 to 173 (GMPNAGKS), 191 to 195 (FTTLH), 213 to 216 (DIPG), 284 to 287 (NKLD), and 329 to 331 (SAL) each bind GTP. Mg(2+) contacts are provided by S173 and T193. The disordered stretch occupies residues 364 to 384 (ATNVEIAEQQPKTDTGVFKPE).

Belongs to the TRAFAC class OBG-HflX-like GTPase superfamily. OBG GTPase family. Monomer. Mg(2+) is required as a cofactor.

It localises to the cytoplasm. Functionally, an essential GTPase which binds GTP, GDP and possibly (p)ppGpp with moderate affinity, with high nucleotide exchange rates and a fairly low GTP hydrolysis rate. Plays a role in control of the cell cycle, stress response, ribosome biogenesis and in those bacteria that undergo differentiation, in morphogenesis control. The polypeptide is GTPase Obg (Neisseria meningitidis serogroup A / serotype 4A (strain DSM 15465 / Z2491)).